A 327-amino-acid polypeptide reads, in one-letter code: Phenylalanine--tRNA ligase alpha subunit (327 aa).

Glu252 is a Mg(2+) binding site.

The protein belongs to the class-II aminoacyl-tRNA synthetase family. Phe-tRNA synthetase alpha subunit type 1 subfamily. Tetramer of two alpha and two beta subunits. Mg(2+) serves as cofactor.

Its subcellular location is the cytoplasm. The catalysed reaction is tRNA(Phe) + L-phenylalanine + ATP = L-phenylalanyl-tRNA(Phe) + AMP + diphosphate + H(+). This Shewanella oneidensis (strain ATCC 700550 / JCM 31522 / CIP 106686 / LMG 19005 / NCIMB 14063 / MR-1) protein is Phenylalanine--tRNA ligase alpha subunit.